A 328-amino-acid polypeptide reads, in one-letter code: Telomere-binding protein cav (328 aa).

The interval Arg-107–Glu-320 is required for binding to Su(var)205. Residues Asp-139–Pro-228 form a disordered region. 2 stretches are compositionally biased toward polar residues: residues Gln-144–Ser-167 and Ala-180–Gln-189. 2 short sequence motifs (su(var)205-binding Pro-containing repeat) span residues Pro-228–Met-232 and Pro-281–Glu-287. The span at Ile-295–Ser-319 shows a compositional bias: polar residues. The disordered stretch occupies residues Ile-295–Ala-328.

As to quaternary structure, interacts (via C-terminus) with Su(var)205 dimer (via hinge and chromoshadow domain) and with moi to form the terminin, telomere-capping, complex. Interacts with HP6, which is also part of the terminin complex.

The protein resides in the nucleus. The protein localises to the chromosome. It localises to the telomere. Its function is as follows. Binds to chromosome ends in a sequence-dependent manner and is required for telomere capping. This Drosophila erecta (Fruit fly) protein is Telomere-binding protein cav.